Here is a 264-residue protein sequence, read N- to C-terminus: Protein OXIDATIVE STRESS 3 LIKE 1 (264 aa).

Disordered stretches follow at residues 1–76 and 178–225; these read MDCV…GPLE and TGEG…QGSF. A compositionally biased stretch (low complexity) spans 29 to 43; the sequence is PSDSSSSPSSSASSS. The span at 47 to 56 shows a compositional bias: basic and acidic residues; that stretch reads NSDDGEKSSE. Over residues 57–67 the composition is skewed to acidic residues; sequence DGGDDAGENEV. The segment covering 179-201 has biased composition (low complexity); that stretch reads GEGSSSGGDSSPGSSPTTSGSPP. Residues 203–212 show a composition bias toward basic residues; the sequence is QLHHHQHQMK.

It localises to the nucleus. Its function is as follows. Promotes slightly the tolerance to zinc (Zn) and to oxidizing chemicals (e.g. diamide). In Arabidopsis thaliana (Mouse-ear cress), this protein is Protein OXIDATIVE STRESS 3 LIKE 1.